The primary structure comprises 562 residues: Formate--tetrahydrofolate ligase (562 aa).

ATP is bound at residue 70 to 77 (TPAGEGKS).

This sequence belongs to the formate--tetrahydrofolate ligase family.

It catalyses the reaction (6S)-5,6,7,8-tetrahydrofolate + formate + ATP = (6R)-10-formyltetrahydrofolate + ADP + phosphate. It functions in the pathway one-carbon metabolism; tetrahydrofolate interconversion. This is Formate--tetrahydrofolate ligase from Paenarthrobacter aurescens (strain TC1).